The chain runs to 591 residues: MTRDLEKLVAQTILQGFDAQYGRFLEVTAGAQQRFEQADWPAVQQAMKQRIHLYDHHVGLVVAQLRCITGIRCDDADFLARMKHIYTGLLPDYPRFEIAESFFNSVYCRLFNHRELAPDKLFVFSSQPEKRFHEIPRPIAKTFVPTDGWQRMLEKLLGDVPLRLPWEDLPRDIDYIVTYLQSTFSAEQLEQATLQVANELFYRNKAAWLAGKLSLPDGVFPFLLPIHHNERGALFIDTCLTAQADASMVFGFARSYFMVYAPQPSALVAWLRDILPGKTTAELYLAIGCQKHSKTEYYREYLHYIAESEEQFIIAPGVKGMVMLVFTLPSFDRVFKVIKDRFAPQKEVSAERVMACYQLVKEHDRVGRMADTQEYENFVIDKHRISPELLDELWREVPEKLEDLGDQLVIRHLYMERRMTPLNLYLEQANAQQLHDVIEEYGNAIKQLAAANIFPGDMLFKNFGVTRHGRVVFYDYDEICYMTEVNFRKIPPPRYLEDELAAEPWYSVAPNDVFPEEFPHFLCSDRHIRTLFEEMHGDLFCADYWRALQQRIREGHIEDVYAYRRRKRFSQRAEPLYITTENDSGLCRYPA.

ATP-binding positions include 315–321 (APGVKGM) and K336. D371 is an active-site residue.

The protein belongs to the AceK family.

The protein resides in the cytoplasm. It carries out the reaction L-seryl-[isocitrate dehydrogenase] + ATP = O-phospho-L-seryl-[isocitrate dehydrogenase] + ADP + H(+). Functionally, bifunctional enzyme which can phosphorylate or dephosphorylate isocitrate dehydrogenase (IDH) on a specific serine residue. This is a regulatory mechanism which enables bacteria to bypass the Krebs cycle via the glyoxylate shunt in response to the source of carbon. When bacteria are grown on glucose, IDH is fully active and unphosphorylated, but when grown on acetate or ethanol, the activity of IDH declines drastically concomitant with its phosphorylation. This Pectobacterium atrosepticum (strain SCRI 1043 / ATCC BAA-672) (Erwinia carotovora subsp. atroseptica) protein is Isocitrate dehydrogenase kinase/phosphatase.